The chain runs to 977 residues: Serine/threonine-protein kinase/endoribonuclease IRE1 (977 aa).

The first 18 residues, 1 to 18 (MPARRLLLLLTLLLPGLG), serve as a signal peptide directing secretion. The Lumenal portion of the chain corresponds to 19–443 (IFGSTSTVTL…EAPVDSMLKD (425 aa)). Residue N176 is glycosylated (N-linked (GlcNAc...) asparagine). Residues 410–419 (TSENAPTTVS) are compositionally biased toward polar residues. The disordered stretch occupies residues 410–434 (TSENAPTTVSRDVEEKPAHAPARPE). Residues 444-464 (MATIILSTFLLIGWVAFIITY) form a helical membrane-spanning segment. Over 465–977 (PLSMHQQQQL…PQPPVTPDAL (513 aa)) the chain is Cytoplasmic. The disordered stretch occupies residues 491–559 (QQQQQLPFHP…PSLEQDDGDE (69 aa)). The segment covering 513–552 (TSGPYSESSGTSSPSTSPRASNHSLCSGSSASKAGSSPSL) has biased composition (low complexity). Positions 571–832 (FCPKDVLGHG…AKHVLKHPFF (262 aa)) constitute a Protein kinase domain. Residues 577–585 (LGHGAEGTI), K599, and 643–645 (ELC) contribute to the ATP site. The active-site Proton acceptor is the D688. ATP contacts are provided by residues 690-693 (KPHN) and D711. Phosphoserine occurs at positions 724 and 729. The KEN domain maps to 835 to 963 (LEKQLQFFQD…ERLFQPYYFH (129 aa)). The interval 906 to 907 (NK) is interacts with hydroxy-aryl-aldehyde inhibitors. The residue at position 973 (T973) is a Phosphothreonine.

Belongs to the protein kinase superfamily. Ser/Thr protein kinase family. As to quaternary structure, monomer. Homodimer; disulfide-linked; homodimerization takes place in response to endoplasmic reticulum stress and promotes activation of the kinase and endoribonuclease activities. Dimer formation is driven by hydrophobic interactions within the N-terminal luminal domains and stabilized by disulfide bridges. Interacts (via the luminal region) with DNAJB9/ERdj4; interaction takes place in unstressed cells and promotes recruitment of HSPA5/BiP. Interacts (via the luminal region) with HSPA5/BiP; HSPA5/BiP is a negative regulator of the unfolded protein response (UPR) that prevents homodimerization of ERN1/IRE1 and subsequent activation of the protein. Interaction with HSPA5 also competitively inhibits ERN1 interaction with MANF. Interacts with PDIA6, a negative regulator of the UPR; the interaction is direct and disrupts homodimerization. Interacts with DAB2IP (via PH domain); the interaction occurs in a endoplasmic reticulum stress-induced dependent manner and is required for subsequent recruitment of TRAF2 to ERN1/IRE1. Interacts with TAOK3 and TRAF2. Interacts with RNF13. Interacts with LACC1. Interacts (when unphosphorylated) with DDRGK1; interaction is dependent on UFM1 and takes place in response to endoplasmic reticulum stress, regulating ERN1/IRE1-alpha stability. Interacts (via N-terminus) with P4HB/PDIA1; the interaction is enhanced by phosphorylation of P4HB by FAM20C in response to endoplasmic reticulum stress and results in attenuation of ERN1 activity. Interacts with TMBIM6; this interaction inhibits ERN1 activity. Interacts (via luminal domain) with MANF (via C-terminus); the interaction is decreased in the presence of increasing concentrations of Ca(2+). Mg(2+) serves as cofactor. Autophosphorylated following homodimerization. Autophosphorylation promotes activation of the endoribonuclease domain. In response to ER stress, phosphorylated at Ser-724, Ser-729 and possibly Ser-726; phosphorylation promotes oligomerization and endoribonuclease activity. Dephosphorylated at Ser-724, Ser-729 and possibly Ser-726 by RPAP2 to abort failed ER-stress adaptation and trigger apoptosis. Phosphorylated at Ser-724; in response to the ER stressor tunicamycin. Post-translationally, ADP-ribosylated by PARP16 upon ER stress, which increases both kinase and endonuclease activities. In terms of tissue distribution, ubiquitously expressed. High levels observed in pancreatic tissue.

It is found in the endoplasmic reticulum membrane. It catalyses the reaction L-seryl-[protein] + ATP = O-phospho-L-seryl-[protein] + ADP + H(+). The catalysed reaction is L-threonyl-[protein] + ATP = O-phospho-L-threonyl-[protein] + ADP + H(+). The kinase domain is activated by trans-autophosphorylation following homodimerization. Kinase activity is required for activation of the endoribonuclease domain. Endoribonuclease activity is specifically inhibited by hydroxy-aryl-aldehydes (HAA). Serine/threonine-protein kinase and endoribonuclease that acts as a key sensor for the endoplasmic reticulum unfolded protein response (UPR). In unstressed cells, the endoplasmic reticulum luminal domain is maintained in its inactive monomeric state by binding to the endoplasmic reticulum chaperone HSPA5/BiP. Accumulation of misfolded proteins in the endoplasmic reticulum causes release of HSPA5/BiP, allowing the luminal domain to homodimerize, promoting autophosphorylation of the kinase domain and subsequent activation of the endoribonuclease activity. The endoribonuclease activity is specific for XBP1 mRNA and excises 26 nucleotides from XBP1 mRNA. The resulting spliced transcript of XBP1 encodes a transcriptional activator protein that up-regulates expression of UPR target genes. Acts as an upstream signal for ER stress-induced GORASP2-mediated unconventional (ER/Golgi-independent) trafficking of CFTR to cell membrane by modulating the expression and localization of SEC16A. The polypeptide is Serine/threonine-protein kinase/endoribonuclease IRE1 (Homo sapiens (Human)).